Consider the following 55-residue polypeptide: Chromatin protein Cren7 (55 aa).

This sequence belongs to the Cren7 family. Monomer. Post-translationally, methylated at multiple sites, to varying extents.

It localises to the chromosome. Its subcellular location is the cytoplasm. A chromatin protein, binds double-stranded DNA without sequence specificity. Constrains negative DNA supercoils. The chain is Chromatin protein Cren7 from Ignicoccus hospitalis (strain KIN4/I / DSM 18386 / JCM 14125).